We begin with the raw amino-acid sequence, 493 residues long: Glutamyl-tRNA(Gln) amidotransferase subunit A (493 aa).

Active-site charge relay system residues include Lys-78 and Ser-158. Ser-182 serves as the catalytic Acyl-ester intermediate.

It belongs to the amidase family. GatA subfamily. Heterotrimer of A, B and C subunits.

The catalysed reaction is L-glutamyl-tRNA(Gln) + L-glutamine + ATP + H2O = L-glutaminyl-tRNA(Gln) + L-glutamate + ADP + phosphate + H(+). Allows the formation of correctly charged Gln-tRNA(Gln) through the transamidation of misacylated Glu-tRNA(Gln) in organisms which lack glutaminyl-tRNA synthetase. The reaction takes place in the presence of glutamine and ATP through an activated gamma-phospho-Glu-tRNA(Gln). The sequence is that of Glutamyl-tRNA(Gln) amidotransferase subunit A from Methylorubrum populi (strain ATCC BAA-705 / NCIMB 13946 / BJ001) (Methylobacterium populi).